The chain runs to 395 residues: MLRRLLERPCTLALLVGSQLAVMMYLSLGGFRSLSALFGRDPGPTFDYSHPHDVYSNLSHLPGAPGAAGAPLAQVLPDCPERSPFLVGPVSVSFSPVPSLAEIVERNPRVESGGRYRPAGCEPRSRTAIIVPHRAREHHLRLLLYHLHPFLQRQQLAYGIYVIHQAGNGTFNRAKLLNVGVREALRDEEWDCLFLHDVDLLPENDHNLYVCDPRGPRHVAVAMNKFGYSLPYPQYFGGVSALTPDQYLKMNGFPNEYWGWGGEDDDIATRVRLAGMKISRPPTSVGHYKMVKHRGDKGNEENPHRFDLLVRTQNSWTQDGMNSLTYRLLARELGPLYTNITADIGTDPRGPRAPSGPRYPPGSSQAFRQEMLQRRPPARPGPLPTANHTAPHGSH.

Residues 1-10 (MLRRLLERPC) are Cytoplasmic-facing. Residues 11 to 31 (TLALLVGSQLAVMMYLSLGGF) form a helical; Signal-anchor for type II membrane protein membrane-spanning segment. Residues 32-395 (RSLSALFGRD…ANHTAPHGSH (364 aa)) are Lumenal-facing. Asparagine 57 carries an N-linked (GlcNAc...) asparagine glycan. Cysteines 79 and 121 form a disulfide. A UDP-alpha-D-galactose-binding site is contributed by 132–136 (PHRAR). Asparagine 168 carries an N-linked (GlcNAc...) asparagine glycan. Residues 171-173 (FNR), 198-199 (VD), tyrosine 228, and tryptophan 260 each bind UDP-alpha-D-galactose. Residues cysteine 192 and cysteine 211 are joined by a disulfide bond. Mn(2+) is bound at residue aspartate 199. 262-265 (GEDD) lines the N-acetyl-D-glucosamine pocket. Histidine 293 lines the Mn(2+) pocket. UDP-alpha-D-galactose is bound at residue 293 to 295 (HRG). Arginine 305 provides a ligand contact to N-acetyl-D-glucosamine. Residues asparagine 339 and asparagine 387 are each glycosylated (N-linked (GlcNAc...) asparagine). Positions 341–395 (TADIGTDPRGPRAPSGPRYPPGSSQAFRQEMLQRRPPARPGPLPTANHTAPHGSH) are disordered.

Belongs to the glycosyltransferase 7 family. Mn(2+) is required as a cofactor.

The protein resides in the golgi apparatus. It is found in the golgi stack membrane. It catalyses the reaction an N-acetyl-beta-D-glucosaminyl derivative + UDP-alpha-D-galactose = a beta-D-galactosyl-(1-&gt;4)-N-acetyl-beta-D-glucosaminyl derivative + UDP + H(+). It carries out the reaction N-acetyl-D-glucosamine + UDP-alpha-D-galactose = beta-D-galactosyl-(1-&gt;4)-N-acetyl-D-glucosamine + UDP + H(+). The enzyme catalyses a beta-D-GlcNAc-(1-&gt;3)-beta-D-Gal-(1-&gt;4)-beta-D-Glc-(1&lt;-&gt;1)-Cer(d18:1(4E)) + UDP-alpha-D-galactose = a neolactoside nLc4Cer(d18:1(4E)) + UDP + H(+). The catalysed reaction is a beta-D-glucosylceramide + UDP-alpha-D-galactose = a beta-D-galactosyl-(1-&gt;4)-beta-D-glucosyl-(1&lt;-&gt;1)-ceramide + UDP + H(+). It catalyses the reaction a neolactoside IV(3)-beta-GlcNAc-nLc4Cer + UDP-alpha-D-galactose = a neolactoside nLc6Cer + UDP + H(+). The protein operates within protein modification; protein glycosylation. Responsible for the synthesis of complex-type N-linked oligosaccharides in many glycoproteins as well as the carbohydrate moieties of glycolipids. The sequence is that of Beta-1,4-galactosyltransferase 3 from Rattus norvegicus (Rat).